Consider the following 673-residue polypeptide: Methionine--tRNA ligase (673 aa).

The 'HIGH' region motif lies at 13–23; sequence PYANGSIHLGH. 4 residues coordinate Zn(2+): cysteine 144, cysteine 147, cysteine 157, and cysteine 160. Residues 330–334 carry the 'KMSKS' region motif; it reads KMSKS. Position 333 (lysine 333) interacts with ATP. The region spanning 572 to 673 is the tRNA-binding domain; that stretch reads DFAQLDLRIA…GRARAGMTIS (102 aa).

Belongs to the class-I aminoacyl-tRNA synthetase family. MetG type 1 subfamily. In terms of assembly, homodimer. Zn(2+) serves as cofactor.

It localises to the cytoplasm. The enzyme catalyses tRNA(Met) + L-methionine + ATP = L-methionyl-tRNA(Met) + AMP + diphosphate. Is required not only for elongation of protein synthesis but also for the initiation of all mRNA translation through initiator tRNA(fMet) aminoacylation. This Dichelobacter nodosus (strain VCS1703A) protein is Methionine--tRNA ligase.